The following is a 115-amino-acid chain: MTRVKRGYVARKHRKNILKFTSGFQGAHSKLFRTANQQKMKALAYAQRDRNNRKRDIRRLWITRINAACRNNGIVYNGIIHSMSEKKVHLNRKILAQIAILDSNSFFGIVKEIGM.

It belongs to the bacterial ribosomal protein bL20 family.

The protein localises to the plastid. Its subcellular location is the chloroplast. Functionally, binds directly to 23S ribosomal RNA and is necessary for the in vitro assembly process of the 50S ribosomal subunit. It is not involved in the protein synthesizing functions of that subunit. In Angiopteris evecta (Mule's foot fern), this protein is Large ribosomal subunit protein bL20c.